A 62-amino-acid polypeptide reads, in one-letter code: Small ribosomal subunit protein eS30z/eS30y/eS30x (62 aa).

The segment at 1 to 38 (MGKVHGSLARAGKVRGQTPKVAKQDKKKKPRGRAHKRL) is disordered. The span at 25–38 (DKKKKPRGRAHKRL) shows a compositional bias: basic residues.

It belongs to the eukaryotic ribosomal protein eS30 family.

The chain is Small ribosomal subunit protein eS30z/eS30y/eS30x (RPS30A) from Arabidopsis thaliana (Mouse-ear cress).